Here is a 1013-residue protein sequence, read N- to C-terminus: Ephrin type-B receptor 6 (1013 aa).

Positions 1–31 (MASENTAGSGSRVAGMVYSLWLLVLGPSVLA) are cleaved as a signal peptide. Topologically, residues 32 to 590 (LEEVLLDTTG…LPEKLSLVIG (559 aa)) are extracellular. Residues 33 to 231 (EEVLLDTTGE…FSYTCPSVLR (199 aa)) form the Eph LBD domain. 2 consecutive Fibronectin type-III domains span residues 363 to 478 (PPSA…TSHE) and 479 to 574 (VPSA…TLPQ). Asn472 carries N-linked (GlcNAc...) asparagine glycosylation. The chain crosses the membrane as a helical span at residues 591 to 611 (SILGALAFLLLAAITVLAVIF). At 612–1013 (QRKRRGTGYT…HLRQPGSVEV (402 aa)) the chain is on the cytoplasmic side. The Protein kinase domain occupies 662–911 (IKIEEVIGAG…QLVAAFDKMI (250 aa)). 668–676 (IGAGSFGEV) is a binding site for ATP. The SAM domain maps to 940–1004 (PCLDSPQAWL…LHNIQLLQQH (65 aa)). The short motif at 1011–1013 (VEV) is the PDZ-binding element.

This sequence belongs to the protein kinase superfamily. Tyr protein kinase family. Ephrin receptor subfamily. As to quaternary structure, interacts with CBL and EPHB1. Interacts with FYN; this interaction takes place in a ligand-independent manner. In terms of processing, ligand-binding increases phosphorylation on tyrosine residues. Phosphorylation on tyrosine residues is mediated by transphosphorylation by the catalytically active EPHB1 in a ligand-independent manner. Tyrosine phosphorylation of the receptor may act as a switch on the functional transition from cell adhesion/attraction to de-adhesion/repulsion.

It is found in the membrane. Functionally, kinase-defective receptor for members of the ephrin-B family. Binds to ephrin-B1 and ephrin-B2. Modulates cell adhesion and migration by exerting both positive and negative effects upon stimulation with ephrin-B2. Inhibits JNK activation, T-cell receptor-induced IL-2 secretion and CD25 expression upon stimulation with ephrin-B2. This Rattus norvegicus (Rat) protein is Ephrin type-B receptor 6 (Ephb6).